A 965-amino-acid chain; its full sequence is Calsyntenin-2 (965 aa).

The N-terminal stretch at 1–20 is a signal peptide; it reads MLPGRLCLVPLLLALGVGSG. The Extracellular portion of the chain corresponds to 21–835; that stretch reads GGSGDGGDSR…SIQRSSVVPS (815 aa). 2 Cadherin domains span residues 46–162 and 163–282; these read IETS…APTF and KEPA…MPLF. 2 N-linked (GlcNAc...) asparagine glycosylation sites follow: Asn58 and Asn100. N-linked (GlcNAc...) asparagine glycans are attached at residues Asn344, Asn376, Asn720, and Asn733. Residues 836–856 traverse the membrane as a helical segment; sequence IATVVIIISVCMLVFVVAMGV. Residues 857–965 lie on the Cytoplasmic side of the membrane; sequence YRVRIAHQHF…NTAGVINIWK (109 aa). Residues 891 to 965 are disordered; sequence PMEKHEGPGH…NTAGVINIWK (75 aa). Over residues 892-902 the composition is skewed to basic and acidic residues; it reads MEKHEGPGHGE. Residues 903-915 are compositionally biased toward acidic residues; it reads DETEGEEEEEAEE. A compositionally biased stretch (polar residues) spans 942-959; that stretch reads QSGTSSQRPERSTWNTAG.

Belongs to the calsyntenin family. Proteolytically processed under normal cellular conditions. A primary zeta-cleavage generates a large extracellular (soluble) N-terminal domain (sAlc) and a short C-terminal transmembrane fragment (CTF1). A secondary cleavage catalyzed by gamma-secretase within the transmembrane domain releases the beta-Alc-gamma chain in the extracellular milieu and produces an intracellular fragment (AlcICD). This processing is strongly suppressed in the tripartite complex formed with APBA2 and APP, which seems to prevent the association with PSEN1.

It is found in the postsynaptic cell membrane. The protein localises to the endoplasmic reticulum membrane. Its subcellular location is the golgi apparatus membrane. The protein resides in the cell projection. It localises to the dendrite. Its function is as follows. Postsynaptic adhesion molecule that binds to presynaptic neurexins to mediate synapse formation, and which is involved in learning and memory. Promotes synapse development by acting as a cell adhesion molecule at the postsynaptic membrane, which associates with neurexin-alpha at the presynaptic membrane. The protein is Calsyntenin-2 of Rattus norvegicus (Rat).